The following is a 386-amino-acid chain: MERYTMLRFLDAGESHGKAMMSIIDGIPSNFKVDIDFINNELKRRQKCYGRGGRMKIEKDKIQFLSGLRGTMTTGNPITMAIYNNDSPNWEKILSGEVKKDEKITIPRPGHGDLVGYFKYGTGDIRDSIERTSARETSIRTAVGALCKQILKGIGIEVRSKVYSIGNLFDEKVDLFDQCKYKKIDNSLLRCYNEEVEKSFVKKIDICREQGETIGGTVFLSVRGVPIGLGSYSQWDRKLDALLSYAIMSLQGVKAIEFGNGMNLNLRGSTFNDEILYEKGKFKRPTNNCGGIESGVSNGENIEMKVYIKPIPSIKKNIRTVNLRNRKETTTRYERSDVSAVVPASIVLENIVAFEILKEILNKFPSDEYYELKRNISHYRGTIYLR.

Residues Arg-45 and Arg-51 each coordinate NADP(+). Residues 131 to 133, 251 to 252, Ser-294, 309 to 313, and Arg-335 contribute to the FMN site; these read RTS, QG, and KPIPS.

Belongs to the chorismate synthase family. Homotetramer. FMNH2 serves as cofactor.

It carries out the reaction 5-O-(1-carboxyvinyl)-3-phosphoshikimate = chorismate + phosphate. It participates in metabolic intermediate biosynthesis; chorismate biosynthesis; chorismate from D-erythrose 4-phosphate and phosphoenolpyruvate: step 7/7. In terms of biological role, catalyzes the anti-1,4-elimination of the C-3 phosphate and the C-6 proR hydrogen from 5-enolpyruvylshikimate-3-phosphate (EPSP) to yield chorismate, which is the branch point compound that serves as the starting substrate for the three terminal pathways of aromatic amino acid biosynthesis. This reaction introduces a second double bond into the aromatic ring system. This is Chorismate synthase from Clostridium tetani (strain Massachusetts / E88).